A 245-amino-acid polypeptide reads, in one-letter code: Chymotrypsin B (245 aa).

Cystine bridges form between cysteine 1/cysteine 121, cysteine 42/cysteine 58, cysteine 135/cysteine 201, cysteine 167/cysteine 182, and cysteine 191/cysteine 220. Positions 14-15 (AR) are excised as a propeptide. Residues 16-243 (IVNGEEAVPH…LRGWVDQILA (228 aa)) enclose the Peptidase S1 domain. Residues histidine 57 and aspartate 101 each act as charge relay system in the active site. Serine 195 acts as the Charge relay system in catalysis.

This sequence belongs to the peptidase S1 family.

The protein localises to the secreted. Its subcellular location is the extracellular space. The catalysed reaction is Preferential cleavage: Tyr-|-Xaa, Trp-|-Xaa, Phe-|-Xaa, Leu-|-Xaa.. This chain is Chymotrypsin B, found in Gadus morhua (Atlantic cod).